We begin with the raw amino-acid sequence, 633 residues long: Chaperone protein HtpG (633 aa).

Residues M1–R344 form an a; substrate-binding region. A b region spans residues E345 to R560. Residues L561–S633 form a c region.

Belongs to the heat shock protein 90 family. As to quaternary structure, homodimer.

The protein localises to the cytoplasm. Functionally, molecular chaperone. Has ATPase activity. This Coxiella burnetii (strain RSA 331 / Henzerling II) protein is Chaperone protein HtpG.